The primary structure comprises 241 residues: Small ribosomal subunit protein uS2 (241 aa).

This sequence belongs to the universal ribosomal protein uS2 family.

The sequence is that of Small ribosomal subunit protein uS2 from Salmonella agona (strain SL483).